We begin with the raw amino-acid sequence, 430 residues long: Enolase (430 aa).

(2R)-2-phosphoglycerate is bound at residue glutamine 163. Catalysis depends on glutamate 205, which acts as the Proton donor. Mg(2+) contacts are provided by aspartate 242, glutamate 285, and aspartate 312. (2R)-2-phosphoglycerate is bound by residues lysine 337, arginine 366, serine 367, and lysine 388. Catalysis depends on lysine 337, which acts as the Proton acceptor.

The protein belongs to the enolase family. It depends on Mg(2+) as a cofactor.

Its subcellular location is the cytoplasm. The protein localises to the secreted. It localises to the cell surface. It carries out the reaction (2R)-2-phosphoglycerate = phosphoenolpyruvate + H2O. It participates in carbohydrate degradation; glycolysis; pyruvate from D-glyceraldehyde 3-phosphate: step 4/5. Catalyzes the reversible conversion of 2-phosphoglycerate (2-PG) into phosphoenolpyruvate (PEP). It is essential for the degradation of carbohydrates via glycolysis. The protein is Enolase of Maridesulfovibrio salexigens (strain ATCC 14822 / DSM 2638 / NCIMB 8403 / VKM B-1763) (Desulfovibrio salexigens).